The chain runs to 62 residues: Defensin BmKDfsin4 (62 aa).

The N-terminal stretch at 1–24 (MKTIVLLFVLALVFCTLEMGIVEA) is a signal peptide. Cystine bridges form between cysteine 28/cysteine 49, cysteine 35/cysteine 57, and cysteine 39/cysteine 59.

The protein belongs to the invertebrate defensin family. Type 2 subfamily.

It localises to the secreted. Dual-function peptide with antimicrobial and potassium channel-blocking activities. Shows inhibitory activity against Gram-positive bacteria such as S.aureus, B.subtilis, and M.luteus as well as methicillin-resistant S.aureus (MIC=0.1-20 uM). Does not act on bacteria by disrupting membranes. Also moderately inhibits Kv1.1/KCNA1 (25.2% inhibition at 1 uM), Kv1.2/KCNA2 (30.5% inhibition at 1 uM), and Kv1.3/KCNA3 potassium channels (IC(50)=510.2 nM, 61% inhibition at 1 uM). Inhibits potassium channels by interacting with the pore region. Does not show hemolytic activity. In vitro, dose-dependently decreases the production of Hepatitis B virus (HBV) DNA and HBV viral proteins in both culture medium and cell lysate. The protein is Defensin BmKDfsin4 of Olivierus martensii (Manchurian scorpion).